We begin with the raw amino-acid sequence, 946 residues long: Ent-kaur-16-ene synthase (946 aa).

6 residues coordinate Mg(2+): Asp656, Glu660, Asn839, Asp840, Ser843, and Asp847. The DEXXE motif motif lies at 656-660 (DEFFE).

Belongs to the terpene synthase family. Requires Mg(2+) as cofactor.

It carries out the reaction ent-copalyl diphosphate = ent-kaur-16-ene + diphosphate. The catalysed reaction is (2E,6E,10E)-geranylgeranyl diphosphate = ent-copalyl diphosphate. It participates in plant hormone biosynthesis; gibberellin biosynthesis. In terms of biological role, catalyzes the conversion of geranylgeranyl diphosphate to the gibberellin precursor ent-kaurene diphosphate in a two step process. This is Ent-kaur-16-ene synthase from Phaeosphaeria sp. (strain L487).